Reading from the N-terminus, the 674-residue chain is Xaa-Pro aminopeptidase 2 (674 aa).

The N-terminal stretch at 1-21 is a signal peptide; that stretch reads MARAHWGCCPWLVLLCACAWG. 3 N-linked (GlcNAc...) asparagine glycosylation sites follow: N35, N49, and N65. Residue R116 coordinates substrate. N-linked (GlcNAc...) asparagine glycosylation is found at N278 and N291. H430 contributes to the substrate binding site. The Zn(2+) site is built by D450, D461, and H524. H524, H533, and E555 together coordinate substrate. E555 and E569 together coordinate Zn(2+). The GPI-anchor amidated alanine moiety is linked to residue A649. The propeptide at 650–674 is removed in mature form; that stretch reads ARAPDTASWASVLVVSTLAILGWSV.

Belongs to the peptidase M24B family. In terms of assembly, homotrimer. Zn(2+) is required as a cofactor. N-glycosylated. In terms of tissue distribution, expressed in kidney, lung, heart, placenta, liver, small intestine and colon. No expression in brain, skeletal muscle, pancreas, spleen, thymus, prostate, testis and ovary.

It is found in the cell membrane. The enzyme catalyses Release of any N-terminal amino acid, including proline, that is linked to proline, even from a dipeptide or tripeptide.. Its activity is regulated as follows. Inhibited by apstatin and the chelating agent 1,10-phenanthroline. Also inhibited by high concentrations of Zn(2+). Not significantly inhibited by bestatin or phosphoramidon. In terms of biological role, membrane-bound metalloprotease which catalyzes the removal of a penultimate prolyl residue from the N-termini of peptides, such as Arg-Pro-Pro. May play a role in the metabolism of the vasodilator bradykinin. This Homo sapiens (Human) protein is Xaa-Pro aminopeptidase 2 (XPNPEP2).